The sequence spans 437 residues: Argininosuccinate lyase (437 aa).

This sequence belongs to the lyase 1 family. Argininosuccinate lyase subfamily.

It localises to the cytoplasm. It carries out the reaction 2-(N(omega)-L-arginino)succinate = fumarate + L-arginine. The protein operates within amino-acid biosynthesis; L-arginine biosynthesis; L-arginine from L-ornithine and carbamoyl phosphate: step 3/3. The chain is Argininosuccinate lyase from Clostridium acetobutylicum (strain ATCC 824 / DSM 792 / JCM 1419 / IAM 19013 / LMG 5710 / NBRC 13948 / NRRL B-527 / VKM B-1787 / 2291 / W).